The primary structure comprises 520 residues: Polycomb protein PHO (520 aa).

4 C2H2-type zinc fingers span residues 357–381 (IACP…LHTH), 386–408 (HVCA…QLVH), 414–438 (FQCT…VRIH), and 444–468 (FVCP…ILTH). Residues 475–497 (TSISGKSGCSNAESNSQSEDTSA) are disordered.

Component of the Esc/E(z) complex, composed of Esc, E(z), Su(z)12, HDAC1/Rpd3 and Caf1-55. This complex is distinct from the PRC1 complex, which contains many other PcG proteins like Pc, Ph, Psc, Su(z)2. The two complexes however cooperate and interact together during the first 3 hours of development to establish PcG silencing. Component of the chromatin remodeling Ino80 complex. Interacts with Sfmbt to form a pho-repressive complex (PhoRC).

The protein localises to the nucleus. Its function is as follows. Polycomb group (PcG) protein that binds to the 5'-CNGCCATNNNNG-3' sequence found in the regulatory regions of many genes. PcG proteins act by forming multiprotein complexes, which are required to maintain the transcriptionally repressive state of homeotic genes throughout development. PcG proteins are not required to initiate repression, but to maintain it during later stages of development. They probably act via the methylation of histones, rendering chromatin heritably changed in its expressibility. Probably targets the Esc/E(z) complex to DNA. Necessary but not sufficient to recruit a functional PcG repressive complex that represses target genes, suggesting that the recruitment of the distinct PRC1 complex is also required to allow a subsequent repression. In terms of biological role, proposed core component of the chromatin remodeling Ino80 complex which is involved in transcriptional regulation, DNA replication and probably DNA repair. This is Polycomb protein PHO (pho) from Drosophila melanogaster (Fruit fly).